The primary structure comprises 97 residues: Putative membrane protein insertion efficiency factor (97 aa).

The interval 68 to 97 (VPGTELNTAPRSGQACNPTESTHSTTQTRH) is disordered. Residues 72 to 97 (ELNTAPRSGQACNPTESTHSTTQTRH) show a composition bias toward polar residues.

It belongs to the UPF0161 family.

It is found in the cell inner membrane. Could be involved in insertion of integral membrane proteins into the membrane. The polypeptide is Putative membrane protein insertion efficiency factor (Marinobacter nauticus (strain ATCC 700491 / DSM 11845 / VT8) (Marinobacter aquaeolei)).